The sequence spans 519 residues: Cytochrome P450 monooxygenase easM (519 aa).

A helical transmembrane segment spans residues 16–33; the sequence is VAPALFASSISVLFLILS. 2 N-linked (GlcNAc...) asparagine glycosylation sites follow: N50 and N353. C458 provides a ligand contact to heme.

This sequence belongs to the cytochrome P450 family. Requires heme as cofactor.

The protein localises to the membrane. It functions in the pathway alkaloid biosynthesis; ergot alkaloid biosynthesis. Its function is as follows. Cytochrome P450 monooxygenase; part of the gene cluster that mediates the biosynthesis of fumiclavanine C, a fungal ergot alkaloid. DmaW catalyzes the first step of ergot alkaloid biosynthesis by condensing dimethylallyl diphosphate (DMAP) and tryptophan to form 4-dimethylallyl-L-tryptophan. The second step is catalyzed by the methyltransferase easF that methylates 4-dimethylallyl-L-tryptophan in the presence of S-adenosyl-L-methionine, resulting in the formation of 4-dimethylallyl-L-abrine. The catalase easC and the FAD-dependent oxidoreductase easE then transform 4-dimethylallyl-L-abrine to chanoclavine-I which is further oxidized by EasD in the presence of NAD(+), resulting in the formation of chanoclavine-I aldehyde. EasA reduces chanoclavine-I aldehyde to dihydrochanoclavine-I aldehyde that spontaneously dehydrates to form 6,8-dimethyl-6,7-didehydroergoline. EasG then catalyzes the reduction of 6,8-dimethyl-6,7-didehydroergoline to form festuclavine. Hydrolysis of festuclavine by easM then leads to the formation of fumigaclavine B which is in turn acetylated by easN to fumigaclavine A. Finally, easL catalyzes the conversion of fumigaclavine A into fumigaclavine C by attaching a dimethylallyl moiety to C-2 of the indole nucleus. The sequence is that of Cytochrome P450 monooxygenase easM from Aspergillus fumigatus (strain ATCC MYA-4609 / CBS 101355 / FGSC A1100 / Af293) (Neosartorya fumigata).